The chain runs to 484 residues: uncharacterized protein (484 aa).

Positions 334-484 constitute an N-acetyltransferase domain; that stretch reads IIIRQITDND…ENEWIYEVNL (151 aa).

This is an uncharacterized protein from Methanocaldococcus jannaschii (strain ATCC 43067 / DSM 2661 / JAL-1 / JCM 10045 / NBRC 100440) (Methanococcus jannaschii).